A 328-amino-acid polypeptide reads, in one-letter code: Transcription factor bHLH84 (328 aa).

The tract at residues 145–248 is disordered; the sequence is QCESSKKRTR…ASRGAATDPQ (104 aa). Positions 220–229 are enriched in basic and acidic residues; it reads LSKEDGEDSK. A bHLH domain is found at 243–292; it reads AATDPQSLYARKRRERINERLRILQHLVPNGTKVDISTMLEEAVQYVKFL.

This sequence belongs to the bHLH protein family. Homodimer.

The protein resides in the nucleus. This is Transcription factor bHLH84 (BHLH84) from Arabidopsis thaliana (Mouse-ear cress).